The chain runs to 392 residues: Chaperone protein DnaJ (392 aa).

Residues 2 to 67 (DYYTILGVAK…QKRESYDRYG (66 aa)) form the J domain. The CR-type zinc finger occupies 149–227 (GVEKELLVSG…CRGQGRIKDK (79 aa)). Zn(2+) is bound by residues Cys162, Cys165, Cys179, Cys182, Cys201, Cys204, Cys215, and Cys218. CXXCXGXG motif repeat units follow at residues 162–169 (CDACSGSG), 179–186 (CDRCKGSG), 201–208 (CPDCSGEG), and 215–222 (CSECRGQG).

The protein belongs to the DnaJ family. Homodimer. It depends on Zn(2+) as a cofactor.

The protein resides in the cytoplasm. Participates actively in the response to hyperosmotic and heat shock by preventing the aggregation of stress-denatured proteins and by disaggregating proteins, also in an autonomous, DnaK-independent fashion. Unfolded proteins bind initially to DnaJ; upon interaction with the DnaJ-bound protein, DnaK hydrolyzes its bound ATP, resulting in the formation of a stable complex. GrpE releases ADP from DnaK; ATP binding to DnaK triggers the release of the substrate protein, thus completing the reaction cycle. Several rounds of ATP-dependent interactions between DnaJ, DnaK and GrpE are required for fully efficient folding. Also involved, together with DnaK and GrpE, in the DNA replication of plasmids through activation of initiation proteins. The polypeptide is Chaperone protein DnaJ (Chlamydia muridarum (strain MoPn / Nigg)).